The primary structure comprises 319 residues: Lipoyl synthase (319 aa).

Residues cysteine 66, cysteine 71, cysteine 77, cysteine 92, cysteine 96, cysteine 99, and serine 305 each coordinate [4Fe-4S] cluster. Residues 78–294 (FNRGTATFMI…KKEALSIGFT (217 aa)) enclose the Radical SAM core domain.

It belongs to the radical SAM superfamily. Lipoyl synthase family. [4Fe-4S] cluster serves as cofactor.

Its subcellular location is the cytoplasm. It carries out the reaction [[Fe-S] cluster scaffold protein carrying a second [4Fe-4S](2+) cluster] + N(6)-octanoyl-L-lysyl-[protein] + 2 oxidized [2Fe-2S]-[ferredoxin] + 2 S-adenosyl-L-methionine + 4 H(+) = [[Fe-S] cluster scaffold protein] + N(6)-[(R)-dihydrolipoyl]-L-lysyl-[protein] + 4 Fe(3+) + 2 hydrogen sulfide + 2 5'-deoxyadenosine + 2 L-methionine + 2 reduced [2Fe-2S]-[ferredoxin]. The protein operates within protein modification; protein lipoylation via endogenous pathway; protein N(6)-(lipoyl)lysine from octanoyl-[acyl-carrier-protein]: step 2/2. Its function is as follows. Catalyzes the radical-mediated insertion of two sulfur atoms into the C-6 and C-8 positions of the octanoyl moiety bound to the lipoyl domains of lipoate-dependent enzymes, thereby converting the octanoylated domains into lipoylated derivatives. The protein is Lipoyl synthase of Buchnera aphidicola subsp. Schizaphis graminum (strain Sg).